The primary structure comprises 506 residues: MNTLTLTPGHLSFAQLRAVWQQPVQLRLDSSAVDGINASVDCVNNIVAEGRTAYGINTGFGLLAQTRIATEDLQNLQRSLVLSHAAGIGEPLDDAMVRLIMVLKINSLARGFSGIRLSVIEALIALVNAEVWPLIPAKGSVGASGDLAPLAHMSLTLLGEGKARWQGEWLPAKEALKKAGLEPITLAAKEGLALLNGTQASTAFALRGLFEAQALFASAVVCGALTTEAVLGSRRPFDARIHAARGQRGQIDAAGLFRHVLTETSAIAQSHHNCEKVQDPYSLRCQPQVMGACLTQLRQAMEVLLVEANAVSDNPLVFAEEGDVISGGNFHAEPVAMAADNLALAIAEIGALSERRIALMMDKHMSQLPPFLVKNGGVNSGFMIAQVTAAALASENKALAHPHSVDSLPTSANQEDHVSMAPAAGRRLWEMAANTRGVIAVEWLAACQGIDLREGLTSSPLLEQARKALREQVPHYTQDRFFAPDIECATELLARGDLFRLLPDFL.

Positions 143–145 (ASG) form a cross-link, 5-imidazolinone (Ala-Gly). Position 144 is a 2,3-didehydroalanine (Ser) (Ser144).

Belongs to the PAL/histidase family. Post-translationally, contains an active site 4-methylidene-imidazol-5-one (MIO), which is formed autocatalytically by cyclization and dehydration of residues Ala-Ser-Gly.

Its subcellular location is the cytoplasm. It catalyses the reaction L-histidine = trans-urocanate + NH4(+). The protein operates within amino-acid degradation; L-histidine degradation into L-glutamate; N-formimidoyl-L-glutamate from L-histidine: step 1/3. The sequence is that of Histidine ammonia-lyase from Citrobacter koseri (strain ATCC BAA-895 / CDC 4225-83 / SGSC4696).